A 301-amino-acid polypeptide reads, in one-letter code: Lysozyme-like protein 3 (301 aa).

The first 15 residues, methionine 1–serine 15, serve as a signal peptide directing secretion. The 219-residue stretch at histidine 64–threonine 282 folds into the Ch-type lysozyme domain.

This sequence belongs to the glycosyl hydrolase 25 family.

In terms of biological role, plays a role in the stress response to heavy metals such as copper, probably in a kgb-1-dependent manner. The chain is Lysozyme-like protein 3 from Caenorhabditis elegans.